A 172-amino-acid chain; its full sequence is uncharacterized protein (172 aa).

This sequence belongs to the archaeal NMN adenylyltransferase family.

This is an uncharacterized protein from Aeropyrum pernix (strain ATCC 700893 / DSM 11879 / JCM 9820 / NBRC 100138 / K1).